A 153-amino-acid polypeptide reads, in one-letter code: Satratoxin biosynthesis SC2 cluster transcription factor SAT15 (153 aa).

The protein localises to the nucleus. Its function is as follows. Transcriptional regulator that may regulate the expression of the satratoxin biosynthesis SC2 cluster, one of the 3 clusters involved in the biosynthesis of satratoxins, trichothecene mycotoxins that are associated with human food poisonings. The sequence is that of Satratoxin biosynthesis SC2 cluster transcription factor SAT15 from Stachybotrys chartarum (strain CBS 109288 / IBT 7711) (Toxic black mold).